Reading from the N-terminus, the 388-residue chain is Protein TsgA homolog (388 aa).

The next 12 membrane-spanning stretches (helical) occupy residues Trp11 to Met31, Thr50 to Ile70, Ile77 to Phe97, Ile101 to Ile121, Leu133 to Ala153, Ile160 to Thr180, Val206 to Trp226, Ser244 to Ile264, Asn268 to Ile288, Tyr298 to Ala318, Leu332 to Val352, and Thr360 to Phe380.

It belongs to the major facilitator superfamily. TsgA family.

It is found in the cell membrane. The chain is Protein TsgA homolog from Buchnera aphidicola subsp. Acyrthosiphon pisum (strain 5A).